Here is a 273-residue protein sequence, read N- to C-terminus: Large ribosomal subunit protein uL2 (273 aa).

Residues 228–273 (VDHPHGGGEGKTSGGRHPVTPWGFPTKGKKTRKNKRTSKFIVKKRK) form a disordered region. A compositionally biased stretch (basic residues) spans 254 to 273 (KGKKTRKNKRTSKFIVKKRK).

Belongs to the universal ribosomal protein uL2 family. In terms of assembly, part of the 50S ribosomal subunit. Forms a bridge to the 30S subunit in the 70S ribosome.

One of the primary rRNA binding proteins. Required for association of the 30S and 50S subunits to form the 70S ribosome, for tRNA binding and peptide bond formation. It has been suggested to have peptidyltransferase activity; this is somewhat controversial. Makes several contacts with the 16S rRNA in the 70S ribosome. This chain is Large ribosomal subunit protein uL2, found in Rickettsia massiliae (strain Mtu5).